Reading from the N-terminus, the 719-residue chain is Polyribonucleotide nucleotidyltransferase (719 aa).

Asp-491 and Asp-497 together coordinate Mg(2+). The 60-residue stretch at 558 to 617 folds into the KH domain; the sequence is PRMLTIKINPEKIRDVIGKGGATIRALTEETGTQIDISDDGTIVIASVDETQAKEAQRRI. Residues 627 to 695 form the S1 motif domain; sequence GQIYDGSVLR…DKGRLRLSIK (69 aa).

The protein belongs to the polyribonucleotide nucleotidyltransferase family. It depends on Mg(2+) as a cofactor.

The protein localises to the cytoplasm. It catalyses the reaction RNA(n+1) + phosphate = RNA(n) + a ribonucleoside 5'-diphosphate. In terms of biological role, involved in mRNA degradation. Catalyzes the phosphorolysis of single-stranded polyribonucleotides processively in the 3'- to 5'-direction. This Bordetella parapertussis (strain 12822 / ATCC BAA-587 / NCTC 13253) protein is Polyribonucleotide nucleotidyltransferase.